The chain runs to 383 residues: MEAVHFGAGNIGRGFIGETLAANGFKINFVDVNETIINALNQRGEYTITLAAPGEKKIHVDNVDGLNNAKDPEAVVKAIAQADLVTTAIGPKILPIIAPLIAQGLQARDAANNHQALDVIACENMIGGSQSLKKSVYEHLDDAGKTFADTYVGFPNAAVDRIVPQQKHDDPLAVSVEDFKEWVVDESQMKNKDLKLKTVDYVPDLEPYIERKLFSVNTGHATTAYTGKYLGYTTIGDAIKDPKVFNQAKGALAETRSLLLSEFKNFDEKDLENYQNRVLQRFQNPYISDDISRVARTPIRKLGYDERFIRPIRELKERGLNYSVLMDTVGMMFHYVEPNDAEAVKLQAMLKDQPLVDVIKEVTGLKDAGLIDEVEASVKSKDR.

3-14 (AVHFGAGNIGRG) provides a ligand contact to NAD(+).

The protein belongs to the mannitol dehydrogenase family.

It carries out the reaction D-mannitol 1-phosphate + NAD(+) = beta-D-fructose 6-phosphate + NADH + H(+). This is Mannitol-1-phosphate 5-dehydrogenase from Lacticaseibacillus casei (strain BL23) (Lactobacillus casei).